Consider the following 148-residue polypeptide: Sec-independent protein translocase protein TatB (148 aa).

The chain crosses the membrane as a helical span at residues 1 to 21 (MFDIGFWELVVIGIVALVVLG).

The protein belongs to the TatB family. The Tat system comprises two distinct complexes: a TatABC complex, containing multiple copies of TatA, TatB and TatC subunits, and a separate TatA complex, containing only TatA subunits. Substrates initially bind to the TatABC complex, which probably triggers association of the separate TatA complex to form the active translocon.

The protein localises to the cell inner membrane. Its function is as follows. Part of the twin-arginine translocation (Tat) system that transports large folded proteins containing a characteristic twin-arginine motif in their signal peptide across membranes. Together with TatC, TatB is part of a receptor directly interacting with Tat signal peptides. TatB may form an oligomeric binding site that transiently accommodates folded Tat precursor proteins before their translocation. This chain is Sec-independent protein translocase protein TatB, found in Aeromonas salmonicida (strain A449).